Reading from the N-terminus, the 121-residue chain is Large ribosomal subunit protein bL12 (121 aa).

It belongs to the bacterial ribosomal protein bL12 family. Homodimer. Part of the ribosomal stalk of the 50S ribosomal subunit. Forms a multimeric L10(L12)X complex, where L10 forms an elongated spine to which 2 to 4 L12 dimers bind in a sequential fashion. Binds GTP-bound translation factors.

Forms part of the ribosomal stalk which helps the ribosome interact with GTP-bound translation factors. Is thus essential for accurate translation. The sequence is that of Large ribosomal subunit protein bL12 from Halalkalibacterium halodurans (strain ATCC BAA-125 / DSM 18197 / FERM 7344 / JCM 9153 / C-125) (Bacillus halodurans).